A 1879-amino-acid chain; its full sequence is Genome polyprotein (1879 aa).

The interval 37-98 is disordered; sequence GPLDHDSRHG…TSTDVVRSGP (62 aa). Positions 38–50 are enriched in basic and acidic residues; it reads PLDHDSRHGRDPV. Polar residues predominate over residues 79-93; that stretch reads SGTNPSHLKPTSTDV. The 157-residue stretch at 564 to 720 folds into the SF3 helicase domain; the sequence is DNVISCCTRR…ENWKRENPGK (157 aa). An ATP-binding site is contributed by 590–597; the sequence is GPPGCGKT. An O-(5'-phospho-RNA)-tyrosine modification is found at Y1093. A Peptidase C24 domain is found at 1188–1341; that stretch reads GVTHKNAIVS…KLIVPYVKVD (154 aa). Active-site for 3CLpro activity residues include H1222, E1243, and C1305. A RdRp catalytic domain is found at 1591 to 1716; that stretch reads HDRYCVDYSK…IVPPLISSVM (126 aa).

In terms of assembly, homodimer. Interacts with NTPase, protein p30 and protease-polymerase p76. Interacts with capsid protein VP1 and protease-polymerase p76. Interacts with host IEF4e; this interaction plays a role in translation of viral proteins. As to quaternary structure, homooligomer. Interacts with Vpg, protein p32 and may interact with capsid protein VP1. Specific enzymatic cleavages in vivo yield mature proteins. Pro-Pol is first autocatalytically cleaved, then processes the whole polyprotein. In terms of processing, VPg is uridylylated by the polymerase and is covalently attached to the 5'-end of the polyadenylated genomic and subgenomic RNAs. This uridylylated form acts as a nucleotide-peptide primer for the polymerase.

It is found in the host endoplasmic reticulum membrane. It catalyses the reaction a ribonucleoside 5'-triphosphate + H2O = a ribonucleoside 5'-diphosphate + phosphate + H(+). The enzyme catalyses RNA(n) + a ribonucleoside 5'-triphosphate = RNA(n+1) + diphosphate. It carries out the reaction Endopeptidase with a preference for cleavage when the P1 position is occupied by Glu-|-Xaa and the P1' position is occupied by Gly-|-Yaa.. In terms of biological role, together with NTPase and NS4, initiates the formation of the replication complex. Induces the proliferation of the host smooth ER membranes forming long tubular structures. These remodeled membranes probably form the viral factories that contain the replication complex. Displays NTPase activity, but no helicase activity. Induces the formation of convoluted membranes derived from the host ER. These remodeled membranes probably form the viral factories that contain the replication complex. Together with NS2 and NS4, initiates the formation of the replication complex. Its function is as follows. Probable key protein responsible for the formation of membrane alterations by the virus. Induces the formation of convoluted membranes derived from the host ER. These remodeled membranes probably form the viral factories that contain the replication complex. Together with NS2 and NTPase, initiates the formation of the replication complex. Functionally, viral genome-linked protein is covalently linked to the 5'-end of the positive-strand, negative-strand genomic RNAs and subgenomic RNA. Acts as a genome-linked replication primer. May recruit ribosome to viral RNA thereby promoting viral proteins translation. Interacts with host translation initiation complex to allow the translation of viral proteins. In terms of biological role, protease-polymerase p76 processes the polyprotein: Pro-Pol is first released by autocleavage, then all other proteins are cleaved. Cleaves host translation initiation factor eIF4G1, eIF4G2 and PABP1 thereby inducing a shutdown of host protein synthesis. This shutdown may not prevent viral mRNA from being translated since viral Vpg replaces the cap. Also functions as an RNA-directed RNA polymerase, which replicates genomic and antigenomic viral RNA by recognizing specific signals. Also transcribes a subgenomic mRNA by initiating RNA synthesis internally on antigenomic RNA. This sgRNA codes for structural proteins. Catalyzes the covalent attachment VPg with viral RNAs. This chain is Genome polyprotein, found in Otariidae (fur seals &amp; sea lions).